Consider the following 488-residue polypeptide: Proline--tRNA ligase (488 aa).

Belongs to the class-II aminoacyl-tRNA synthetase family. ProS type 3 subfamily. In terms of assembly, homodimer.

It localises to the cytoplasm. The enzyme catalyses tRNA(Pro) + L-proline + ATP = L-prolyl-tRNA(Pro) + AMP + diphosphate. Catalyzes the attachment of proline to tRNA(Pro) in a two-step reaction: proline is first activated by ATP to form Pro-AMP and then transferred to the acceptor end of tRNA(Pro). The chain is Proline--tRNA ligase from Borrelia garinii subsp. bavariensis (strain ATCC BAA-2496 / DSM 23469 / PBi) (Borreliella bavariensis).